We begin with the raw amino-acid sequence, 446 residues long: Phosphoglucosamine mutase (446 aa).

Serine 103 serves as the catalytic Phosphoserine intermediate. Mg(2+) is bound by residues serine 103, aspartate 242, aspartate 244, and aspartate 246. Phosphoserine is present on serine 103.

It belongs to the phosphohexose mutase family. Mg(2+) is required as a cofactor. Activated by phosphorylation.

The catalysed reaction is alpha-D-glucosamine 1-phosphate = D-glucosamine 6-phosphate. Functionally, catalyzes the conversion of glucosamine-6-phosphate to glucosamine-1-phosphate. The sequence is that of Phosphoglucosamine mutase from Vibrio campbellii (strain ATCC BAA-1116).